Consider the following 277-residue polypeptide: 3-methyl-2-oxobutanoate hydroxymethyltransferase (277 aa).

2 residues coordinate Mg(2+): D43 and D82. Residues 43–44, D82, and K112 contribute to the 3-methyl-2-oxobutanoate site; that span reads DS. E114 lines the Mg(2+) pocket. E181 acts as the Proton acceptor in catalysis.

The protein belongs to the PanB family. Homodecamer; pentamer of dimers. The cofactor is Mg(2+).

It localises to the cytoplasm. The enzyme catalyses 3-methyl-2-oxobutanoate + (6R)-5,10-methylene-5,6,7,8-tetrahydrofolate + H2O = 2-dehydropantoate + (6S)-5,6,7,8-tetrahydrofolate. Its pathway is cofactor biosynthesis; (R)-pantothenate biosynthesis; (R)-pantoate from 3-methyl-2-oxobutanoate: step 1/2. In terms of biological role, catalyzes the reversible reaction in which hydroxymethyl group from 5,10-methylenetetrahydrofolate is transferred onto alpha-ketoisovalerate to form ketopantoate. The polypeptide is 3-methyl-2-oxobutanoate hydroxymethyltransferase (Listeria innocua serovar 6a (strain ATCC BAA-680 / CLIP 11262)).